Reading from the N-terminus, the 91-residue chain is PqqA binding protein (91 aa).

Belongs to the PqqD family. Monomer. Interacts with PqqE.

It functions in the pathway cofactor biosynthesis; pyrroloquinoline quinone biosynthesis. Its function is as follows. Functions as a PqqA binding protein and presents PqqA to PqqE, in the pyrroloquinoline quinone (PQQ) biosynthetic pathway. The protein is PqqA binding protein of Pseudomonas fluorescens (strain Pf0-1).